Consider the following 76-residue polypeptide: Rhesus theta defensin-1/2 subunit B (76 aa).

An N-terminal signal peptide occupies residues 1 to 22 (MRTFALLTAMLLLVALHAQAEA). Residues 23 to 64 (RQARADEAAAQQQPGADDQGMAHSFTRPENAALPLSESARGL) constitute a propeptide that is removed on maturation. The segment at 25 to 54 (ARADEAAAQQQPGADDQGMAHSFTRPENAA) is disordered. The span at 30–44 (AAAQQQPGADDQGMA) shows a compositional bias: low complexity. Arg-65 participates in a covalent cross-link: Cyclopeptide (Arg-Cys) (interchain with C-73 in subunit A); in form RTD-1. Residue Arg-65 forms a Cyclopeptide (Arg-Cys) (interchain with C-73 in subunit B); in form RTD-2 linkage. An intrachain disulfide couples Cys-68 to Cys-73. Residue Cys-73 forms a Cyclopeptide (Cys-Arg) (interchain with R-65 in subunit A); in form RTD-1 linkage. Cys-73 participates in a covalent cross-link: Cyclopeptide (Cys-Arg) (interchain with R-65 in subunit B); in form RTD-2. A propeptide spanning residues 74–76 (QLL) is cleaved from the precursor.

Belongs to the alpha-defensin family. Theta subfamily. As to quaternary structure, RTD-1 is a cyclic heterodimer composed of subunits A and B; disulfide-linked. RTD-2 is a cyclic homodimer composed of two subunits B; disulfide-linked. In terms of processing, forms a cyclic peptide with 1 subunit B (RTD-2) or with 1 subunit A (RTD-1). An additional intersubunit disulfide bond is formed. As to expression, RTD-1 is expressed in bone marrow. Detected in promyelocytes, myelocytes and mature neutrophils and monocytes.

Its function is as follows. RTD-1 and RTD-2 have similar antimicrobial activities against the Gram-positive bacteria S.aureus 502A and L.monocytogenes, the Gram-negative bacterium S.typhimurium, and the fungi C.albicans 16820 and C.neoformans 271A. RTD-2 is 2-3-fold less active than RTD-1 against E.coli ML35. This chain is Rhesus theta defensin-1/2 subunit B (RTD1B), found in Macaca mulatta (Rhesus macaque).